Reading from the N-terminus, the 59-residue chain is MLPPLPDFSLSVEQQFDLQKYRQQVRDISREDLEDLFIEVVRQKMAHENIFKGMIRQGS.

The protein to chloroplast ycf18.

In terms of biological role, involved in phycobilisome (PBS) degradation during nutrient deprivation. May mark the PBS for degradation by covalent association with PBS components or may disrupt the PBS via ionic interactions. The sequence is that of Phycobilisome degradation protein NblA from Synechococcus elongatus (strain ATCC 33912 / PCC 7942 / FACHB-805) (Anacystis nidulans R2).